Consider the following 296-residue polypeptide: Lipoyl synthase (296 aa).

[4Fe-4S] cluster is bound by residues cysteine 37, cysteine 42, cysteine 48, cysteine 63, cysteine 67, cysteine 70, and serine 276. The 217-residue stretch at 49–265 (WSKKHTTVMI…ERVAKTKGFL (217 aa)) folds into the Radical SAM core domain.

It belongs to the radical SAM superfamily. Lipoyl synthase family. [4Fe-4S] cluster serves as cofactor.

It is found in the cytoplasm. It catalyses the reaction [[Fe-S] cluster scaffold protein carrying a second [4Fe-4S](2+) cluster] + N(6)-octanoyl-L-lysyl-[protein] + 2 oxidized [2Fe-2S]-[ferredoxin] + 2 S-adenosyl-L-methionine + 4 H(+) = [[Fe-S] cluster scaffold protein] + N(6)-[(R)-dihydrolipoyl]-L-lysyl-[protein] + 4 Fe(3+) + 2 hydrogen sulfide + 2 5'-deoxyadenosine + 2 L-methionine + 2 reduced [2Fe-2S]-[ferredoxin]. Its pathway is protein modification; protein lipoylation via endogenous pathway; protein N(6)-(lipoyl)lysine from octanoyl-[acyl-carrier-protein]: step 2/2. Its function is as follows. Catalyzes the radical-mediated insertion of two sulfur atoms into the C-6 and C-8 positions of the octanoyl moiety bound to the lipoyl domains of lipoate-dependent enzymes, thereby converting the octanoylated domains into lipoylated derivatives. The chain is Lipoyl synthase from Rickettsia conorii (strain ATCC VR-613 / Malish 7).